The primary structure comprises 256 residues: MKLYKYQGTGNDFIMIDNRLQIFPKQNTALIQKLCDRRFGIGADGLILLENDQSTDFKMVYYNSDGNQSTMCGNGGRCLVAFAKKLNIIKNKTTFIAIDGLHHATINENDIISLQMKNVEEVNIHDNYVFLNTGSPHHVQFADNLSNFDVKNEGAKIRYSDLYGQAGSNINFVHQTSPTQFSIRTYERGVEDETLSCGTGATATAIAMKATGKTNSNNITINVQGGKLEVSFNQENSIFTNIFLKGPAEFVFETTI.

The substrate site is built by Asn11 and Asn63. The active-site Proton donor is the Cys72. Substrate contacts are provided by residues Gly73–Asn74, Asn169, and Glu187–Arg188. The active-site Proton acceptor is Cys197. Residue Gly198 to Thr199 participates in substrate binding.

This sequence belongs to the diaminopimelate epimerase family. In terms of assembly, homodimer.

It is found in the cytoplasm. The enzyme catalyses (2S,6S)-2,6-diaminopimelate = meso-2,6-diaminopimelate. The protein operates within amino-acid biosynthesis; L-lysine biosynthesis via DAP pathway; DL-2,6-diaminopimelate from LL-2,6-diaminopimelate: step 1/1. Functionally, catalyzes the stereoinversion of LL-2,6-diaminopimelate (L,L-DAP) to meso-diaminopimelate (meso-DAP), a precursor of L-lysine and an essential component of the bacterial peptidoglycan. This Flavobacterium psychrophilum (strain ATCC 49511 / DSM 21280 / CIP 103535 / JIP02/86) protein is Diaminopimelate epimerase.